An 83-amino-acid chain; its full sequence is Small ribosomal subunit protein bS16 (83 aa).

Belongs to the bacterial ribosomal protein bS16 family.

This Azotobacter vinelandii (strain DJ / ATCC BAA-1303) protein is Small ribosomal subunit protein bS16.